A 622-amino-acid polypeptide reads, in one-letter code: Sodium-coupled monocarboxylate transporter 1 (622 aa).

The Extracellular portion of the chain corresponds to 1–15 (MVTPGNIGSFTVWDY). Residues 16 to 36 (LVFALMLLISAVIGIYYAFAG) traverse the membrane as a helical segment. Residues 37-51 (GGQKTSKDFLMGGRS) lie on the Cytoplasmic side of the membrane. A helical membrane pass occupies residues 52–72 (MTAVPVALSLTASFMSAVTVL). Residues 73–83 (GTPAEVYRFGA) are Extracellular-facing. The chain crosses the membrane as a helical span at residues 84 to 104 (MFIIFAFSYTIVVIISSEVFL). Over 105 to 128 (PVFYRLGITSTYEYLELRFNKFVR) the chain is Cytoplasmic. A helical membrane pass occupies residues 129-149 (LLGTILFIIQTVLYTGIVIYA). Over 150-161 (PALALNQVTGFD) the chain is Extracellular. A helical transmembrane segment spans residues 162-182 (LWGAVVATGVVCTFYCTMGGL). Over 183–184 (KA) the chain is Cytoplasmic. A helical transmembrane segment spans residues 185–205 (VVWTDVFQVGIMVAGFTSVII). Over 206-241 (RAVVVQGGIGPILNDSYYGDRLNFWDFDPNPLKRHT) the chain is Extracellular. N-linked (GlcNAc...) asparagine glycosylation occurs at Asn-219. The chain crosses the membrane as a helical span at residues 242–262 (FWTIVVGGTFTWTGIYGVNQA). The Cytoplasmic segment spans residues 263 to 283 (QVQRYIACKTRFQAKMSLYVN). The chain crosses the membrane as a helical span at residues 284-304 (LIGLWAILACAVLSGLAMYSI). Over 305–336 (YKDCDPWTAKFVSAPDQLMPYLALDILRDYPG) the chain is Extracellular. Residues 337 to 357 (LPGLFVSCAYSGTLSTVSSSI) traverse the membrane as a helical segment. Topologically, residues 358–389 (NALAAVTVEDLIKPYIRSLSEKKMSWISKGTS) are cytoplasmic. The chain crosses the membrane as a helical span at residues 390–410 (LLYGAICIGMAGIASLMGGLL). Residues 411–415 (QAALS) lie on the Extracellular side of the membrane. A helical transmembrane segment spans residues 416–436 (IFGMVGGPLLGLFSLGILFPF). Residues 437–438 (VN) are Cytoplasmic-facing. A helical transmembrane segment spans residues 439–459 (SLGAVIGLLSGFAISLWVGIG). The Extracellular segment spans residues 460-521 (SQIYAPSPSS…LADSWYSLSY (62 aa)). 2 N-linked (GlcNAc...) asparagine glycosylation sites follow: Asn-481 and Asn-488. A helical transmembrane segment spans residues 522-542 (LYFSTIGTIVAVLVGVIVSLL). The Cytoplasmic portion of the chain corresponds to 543–622 (SGGLKQNVNR…KGEKTNGITA (80 aa)). A disordered region spans residues 591–622 (DNDMEQGTDNPAFNNMEMTSTEKGEKTNGITA). The segment covering 595–609 (EQGTDNPAFNNMEMT) has biased composition (polar residues).

It belongs to the sodium:solute symporter (SSF) (TC 2.A.21) family. In terms of tissue distribution, in the gastrula and neurula stages, expressed in the gastrula anterior endoderm and in the entire circumference of the blastopore lip superficial endoderm. At tailbud stages, abundant expression observed in the ventral midgut region. As development proceeds expression becomes restricted to the liver diverticulum and ultimately to the presumptive gallbladder, by tadpole stage 35. Also present in pronephros and the tip of the tail.

Its subcellular location is the apical cell membrane. It catalyses the reaction (S)-lactate(out) + 2 Na(+)(out) = (S)-lactate(in) + 2 Na(+)(in). The catalysed reaction is propanoate(out) + 2 Na(+)(out) = propanoate(in) + 2 Na(+)(in). The enzyme catalyses pyruvate(out) + 2 Na(+)(out) = pyruvate(in) + 2 Na(+)(in). It carries out the reaction acetate(out) + 2 Na(+)(out) = acetate(in) + 2 Na(+)(in). It catalyses the reaction butanoate(out) + 2 Na(+)(out) = butanoate(in) + 2 Na(+)(in). The catalysed reaction is nicotinate(out) + 2 Na(+)(out) = nicotinate(in) + 2 Na(+)(in). The enzyme catalyses (R)-3-hydroxybutanoate(out) + 2 Na(+)(out) = (R)-3-hydroxybutanoate(in) + 2 Na(+)(in). It carries out the reaction acetoacetate(out) + 2 Na(+)(out) = acetoacetate(in) + 2 Na(+)(in). It catalyses the reaction 4-methyl-2-oxopentanoate(out) + 2 Na(+)(out) = 4-methyl-2-oxopentanoate(in) + 2 Na(+)(in). The catalysed reaction is 5-oxo-L-proline(out) + 2 Na(+)(out) = 5-oxo-L-proline(in) + 2 Na(+)(in). The enzyme catalyses iodide(out) = iodide(in). It carries out the reaction chloride(in) = chloride(out). It catalyses the reaction nitrate(in) = nitrate(out). The catalysed reaction is bromide(in) = bromide(out). Acts as an electrogenic sodium (Na(+)) and chloride (Cl-)-dependent sodium-coupled solute transporter, including transport of monocarboxylates (short-chain fatty acids including L-lactate, D-lactate, pyruvate, acetate, propionate, valerate and butyrate), mocarboxylate drugs (nicotinate, benzoate, salicylate and 5-aminosalicylate) and ketone bodies (beta-D-hydroxybutyrate, acetoacetate and alpha-ketoisocaproate), with a Na(+):substrate stoichiometry of between 4:1 and 2:1. Catalyzes passive carrier mediated diffusion of iodide. Mediates iodide transport from the thyrocyte into the colloid lumen through the apical membrane. Mediates sodium-coupled electrogenic transport of pyroglutamate (5-oxo-L-proline). Can mediate the transport of chloride, bromide, iodide and nitrate ions when external concentration of sodium ions is reduced. This is Sodium-coupled monocarboxylate transporter 1 from Xenopus laevis (African clawed frog).